Here is a 379-residue protein sequence, read N- to C-terminus: Quinolinate synthase (379 aa).

Iminosuccinate-binding residues include His-60 and Ser-81. [4Fe-4S] cluster is bound at residue Cys-126. Iminosuccinate is bound by residues Tyr-152–Asn-154 and Ser-169. Cys-213 contacts [4Fe-4S] cluster. Iminosuccinate is bound by residues His-239 to Glu-241 and Thr-256. Cys-310 is a binding site for [4Fe-4S] cluster.

Belongs to the quinolinate synthase family. Type 1 subfamily. It depends on [4Fe-4S] cluster as a cofactor.

The protein localises to the cytoplasm. The enzyme catalyses iminosuccinate + dihydroxyacetone phosphate = quinolinate + phosphate + 2 H2O + H(+). It functions in the pathway cofactor biosynthesis; NAD(+) biosynthesis; quinolinate from iminoaspartate: step 1/1. Its function is as follows. Catalyzes the condensation of iminoaspartate with dihydroxyacetone phosphate to form quinolinate. The sequence is that of Quinolinate synthase from Herminiimonas arsenicoxydans.